Reading from the N-terminus, the 288-residue chain is Probable aquaporin PIP1-2 (288 aa).

The disordered stretch occupies residues 1-37 (MEGKEEDVRLGANKFSERQPIGTAAQGSDDKDYKEPP). The next 2 membrane-spanning stretches (helical) occupy residues 57–77 (IAEF…VMGV) and 92–114 (IAWS…SGGH). The NPA 1 motif lies at 116 to 118 (NPA). 3 helical membrane passes run 135–155 (LFYM…VKGF), 177–197 (GDGL…VFSA), and 211–231 (ILAP…TIPI). An NPA 2 motif is present at residues 237 to 239 (NPA). Residues 259-279 (IFWVGPFIGAALAAIYHQVVI) traverse the membrane as a helical segment.

It belongs to the MIP/aquaporin (TC 1.A.8) family. PIP (TC 1.A.8.11) subfamily. In terms of tissue distribution, expressed in roots, leaves and anthers.

The protein localises to the cell membrane. Its function is as follows. Aquaporins facilitate the transport of water and small neutral solutes across cell membranes. The sequence is that of Probable aquaporin PIP1-2 (PIP1-2) from Oryza sativa subsp. japonica (Rice).